Here is a 91-residue protein sequence, read N- to C-terminus: Small ribosomal subunit protein uS19 (91 aa).

Belongs to the universal ribosomal protein uS19 family.

Functionally, protein S19 forms a complex with S13 that binds strongly to the 16S ribosomal RNA. This is Small ribosomal subunit protein uS19 from Hahella chejuensis (strain KCTC 2396).